The primary structure comprises 234 residues: uncharacterized protein (234 aa).

The next 7 membrane-spanning stretches (helical) occupy residues 25–45 (LMGA…TFFL), 57–77 (LFFL…QGLA), 85–105 (LPIF…TLLM), 108–128 (ATDI…LSVY), 142–162 (AFGV…FFAS), 163–183 (TGLT…LIAW), and 203–223 (WAIS…LFLL).

Belongs to the BI1 family.

Its subcellular location is the cell membrane. This is an uncharacterized protein from Lactococcus lactis subsp. lactis (strain IL1403) (Streptococcus lactis).